We begin with the raw amino-acid sequence, 670 residues long: DNA ligase (670 aa).

NAD(+) is bound by residues 32–36 (DAEYD), 81–82 (SL), and glutamate 110. Lysine 112 acts as the N6-AMP-lysine intermediate in catalysis. Arginine 133, glutamate 170, lysine 289, and lysine 313 together coordinate NAD(+). The Zn(2+) site is built by cysteine 407, cysteine 410, cysteine 425, and cysteine 431. Residues 590–670 (ESQLSLKGQT…ALMDLLNAAN (81 aa)) form the BRCT domain.

This sequence belongs to the NAD-dependent DNA ligase family. LigA subfamily. It depends on Mg(2+) as a cofactor. Mn(2+) is required as a cofactor.

The enzyme catalyses NAD(+) + (deoxyribonucleotide)n-3'-hydroxyl + 5'-phospho-(deoxyribonucleotide)m = (deoxyribonucleotide)n+m + AMP + beta-nicotinamide D-nucleotide.. DNA ligase that catalyzes the formation of phosphodiester linkages between 5'-phosphoryl and 3'-hydroxyl groups in double-stranded DNA using NAD as a coenzyme and as the energy source for the reaction. It is essential for DNA replication and repair of damaged DNA. This chain is DNA ligase, found in Shewanella frigidimarina (strain NCIMB 400).